The following is a 943-amino-acid chain: Isoleucine--tRNA ligase (943 aa).

The 'HIGH' region motif lies at 58–68; sequence PYANGSIHIGH. Glu-567 serves as a coordination point for L-isoleucyl-5'-AMP. The short motif at 608-612 is the 'KMSKS' region element; it reads KMSKS. ATP is bound at residue Lys-611. The Zn(2+) site is built by Cys-906, Cys-909, Cys-926, and Cys-929.

It belongs to the class-I aminoacyl-tRNA synthetase family. IleS type 1 subfamily. In terms of assembly, monomer. Requires Zn(2+) as cofactor.

The protein resides in the cytoplasm. It catalyses the reaction tRNA(Ile) + L-isoleucine + ATP = L-isoleucyl-tRNA(Ile) + AMP + diphosphate. Catalyzes the attachment of isoleucine to tRNA(Ile). As IleRS can inadvertently accommodate and process structurally similar amino acids such as valine, to avoid such errors it has two additional distinct tRNA(Ile)-dependent editing activities. One activity is designated as 'pretransfer' editing and involves the hydrolysis of activated Val-AMP. The other activity is designated 'posttransfer' editing and involves deacylation of mischarged Val-tRNA(Ile). The polypeptide is Isoleucine--tRNA ligase (Pseudomonas fluorescens (strain ATCC BAA-477 / NRRL B-23932 / Pf-5)).